Consider the following 133-residue polypeptide: Phosphoribosyl-AMP cyclohydrolase (133 aa).

Mg(2+) is bound at residue Asp82. Position 83 (Cys83) interacts with Zn(2+). Residues Asp84 and Asp86 each coordinate Mg(2+). Residues Cys99 and Cys106 each coordinate Zn(2+).

This sequence belongs to the PRA-CH family. Homodimer. Mg(2+) serves as cofactor. The cofactor is Zn(2+).

The protein resides in the cytoplasm. The catalysed reaction is 1-(5-phospho-beta-D-ribosyl)-5'-AMP + H2O = 1-(5-phospho-beta-D-ribosyl)-5-[(5-phospho-beta-D-ribosylamino)methylideneamino]imidazole-4-carboxamide. It functions in the pathway amino-acid biosynthesis; L-histidine biosynthesis; L-histidine from 5-phospho-alpha-D-ribose 1-diphosphate: step 3/9. In terms of biological role, catalyzes the hydrolysis of the adenine ring of phosphoribosyl-AMP. This chain is Phosphoribosyl-AMP cyclohydrolase, found in Rhodospirillum centenum (strain ATCC 51521 / SW).